Consider the following 186-residue polypeptide: Ribosome-recycling factor (186 aa).

It belongs to the RRF family.

Its subcellular location is the cytoplasm. In terms of biological role, responsible for the release of ribosomes from messenger RNA at the termination of protein biosynthesis. May increase the efficiency of translation by recycling ribosomes from one round of translation to another. This is Ribosome-recycling factor from Rickettsia typhi (strain ATCC VR-144 / Wilmington).